A 196-amino-acid polypeptide reads, in one-letter code: ATP-dependent Clp protease proteolytic subunit (196 aa).

Serine 101 serves as the catalytic Nucleophile. Histidine 126 is a catalytic residue.

This sequence belongs to the peptidase S14 family. In terms of assembly, component of the chloroplastic Clp protease core complex.

It localises to the plastid. The protein resides in the chloroplast stroma. The enzyme catalyses Hydrolysis of proteins to small peptides in the presence of ATP and magnesium. alpha-casein is the usual test substrate. In the absence of ATP, only oligopeptides shorter than five residues are hydrolyzed (such as succinyl-Leu-Tyr-|-NHMec, and Leu-Tyr-Leu-|-Tyr-Trp, in which cleavage of the -Tyr-|-Leu- and -Tyr-|-Trp bonds also occurs).. In terms of biological role, cleaves peptides in various proteins in a process that requires ATP hydrolysis. Has a chymotrypsin-like activity. Plays a major role in the degradation of misfolded proteins. In Arabis hirsuta (Hairy rock-cress), this protein is ATP-dependent Clp protease proteolytic subunit.